We begin with the raw amino-acid sequence, 250 residues long: PF03932 family protein CutC (250 aa).

This sequence belongs to the CutC family.

It is found in the cytoplasm. The chain is PF03932 family protein CutC from Proteus mirabilis (strain HI4320).